The primary structure comprises 344 residues: Anthranilate phosphoribosyltransferase (344 aa).

5-phospho-alpha-D-ribose 1-diphosphate is bound by residues Gly-85, 88–89, Thr-93, 95–98, 113–121, and Ser-125; these read GD, NIST, and KHGGRSVSS. Gly-85 is a binding site for anthranilate. Ser-97 is a binding site for Mg(2+). Residue Arg-171 participates in anthranilate binding. Mg(2+)-binding residues include Asp-230 and Glu-231.

The protein belongs to the anthranilate phosphoribosyltransferase family. Homodimer. Mg(2+) is required as a cofactor.

The enzyme catalyses N-(5-phospho-beta-D-ribosyl)anthranilate + diphosphate = 5-phospho-alpha-D-ribose 1-diphosphate + anthranilate. It participates in amino-acid biosynthesis; L-tryptophan biosynthesis; L-tryptophan from chorismate: step 2/5. Catalyzes the transfer of the phosphoribosyl group of 5-phosphorylribose-1-pyrophosphate (PRPP) to anthranilate to yield N-(5'-phosphoribosyl)-anthranilate (PRA). This Delftia acidovorans (strain DSM 14801 / SPH-1) protein is Anthranilate phosphoribosyltransferase.